A 150-amino-acid chain; its full sequence is Ribosome maturation factor RimP (150 aa).

It belongs to the RimP family.

The protein localises to the cytoplasm. Its function is as follows. Required for maturation of 30S ribosomal subunits. This chain is Ribosome maturation factor RimP, found in Thermotoga sp. (strain RQ2).